We begin with the raw amino-acid sequence, 298 residues long: Protein ILRUN (298 aa).

The segment at 199-277 is disordered; the sequence is NTQPHRKVEG…SVNLSPSSHA (79 aa). Serine 215 and serine 222 each carry phosphoserine. Residues 242–255 are compositionally biased toward low complexity; that stretch reads TWAPAPDTWAPAPD. Residues 262–277 are compositionally biased toward polar residues; sequence NRLSQNSVNLSPSSHA. Serine 272 is subject to Phosphoserine.

In terms of assembly, interacts with IRF3; the interaction inhibits IRF3 binding to its DNA consensus sequence. Expressed in lung (at protein level).

The protein resides in the cytoplasm. It is found in the nucleus. Its function is as follows. Negative regulator of innate antiviral response. Blocks IRF3-dependent cytokine production such as IFNA, IFNB and TNF. Interacts with IRF3 and inhibits IRF3 recruitment to type I IFN promoter sequences while also reducing nuclear levels of the coactivators EP300 and CREBBP. The protein is Protein ILRUN of Homo sapiens (Human).